Consider the following 336-residue polypeptide: tRNA N6-adenosine threonylcarbamoyltransferase (336 aa).

Fe cation-binding residues include H114 and H118. Residues 136–140 (LVSGG), D169, G182, D186, and N275 each bind substrate. D301 is a Fe cation binding site.

The protein belongs to the KAE1 / TsaD family. The cofactor is Fe(2+).

It is found in the cytoplasm. It catalyses the reaction L-threonylcarbamoyladenylate + adenosine(37) in tRNA = N(6)-L-threonylcarbamoyladenosine(37) in tRNA + AMP + H(+). In terms of biological role, required for the formation of a threonylcarbamoyl group on adenosine at position 37 (t(6)A37) in tRNAs that read codons beginning with adenine. Is involved in the transfer of the threonylcarbamoyl moiety of threonylcarbamoyl-AMP (TC-AMP) to the N6 group of A37, together with TsaE and TsaB. TsaD likely plays a direct catalytic role in this reaction. In Streptococcus pneumoniae serotype 4 (strain ATCC BAA-334 / TIGR4), this protein is tRNA N6-adenosine threonylcarbamoyltransferase.